Reading from the N-terminus, the 197-residue chain is ADP-ribosylation factor-like protein 6-interacting protein 1 (197 aa).

The next 4 membrane-spanning stretches (helical) occupy residues 43 to 63, 64 to 84, 129 to 149, and 150 to 170; these read VVFGVISCLYLVLWYLDLSLI, TLLSLLGVISILLNYAFPMVS, TVFVIVMSLGLLAMAWIGAII, and NNLLLMYLATLLILMWPGLQN.

It belongs to the ARL6ip family.

The protein resides in the membrane. The protein is ADP-ribosylation factor-like protein 6-interacting protein 1 of Drosophila melanogaster (Fruit fly).